A 312-amino-acid polypeptide reads, in one-letter code: DNA-directed RNA polymerase subunit alpha (312 aa).

The segment at 1–229 (MLQYQIDRIE…ELFQPLATVT (229 aa)) is alpha N-terminal domain (alpha-NTD). An alpha C-terminal domain (alpha-CTD) region spans residues 236–312 (IEPEPSAEAQ…ISIPQSRTSV (77 aa)).

It belongs to the RNA polymerase alpha chain family. As to quaternary structure, in cyanobacteria the RNAP catalytic core is composed of 2 alpha, 1 beta, 1 beta', 1 gamma and 1 omega subunit. When a sigma factor is associated with the core the holoenzyme is formed, which can initiate transcription.

It catalyses the reaction RNA(n) + a ribonucleoside 5'-triphosphate = RNA(n+1) + diphosphate. Its function is as follows. DNA-dependent RNA polymerase catalyzes the transcription of DNA into RNA using the four ribonucleoside triphosphates as substrates. The protein is DNA-directed RNA polymerase subunit alpha of Synechococcus sp. (strain CC9311).